The sequence spans 24 residues: MLVLYRKRFSGFRFYFLSIFKYII.

This is an uncharacterized protein from Saccharomyces cerevisiae (strain ATCC 204508 / S288c) (Baker's yeast).